We begin with the raw amino-acid sequence, 854 residues long: MAEGFAANRQWIGPEEAEELLDFDKATQMNEEGPLNPGVNPFRVPAVTEADKQEYCKILQPRLQEIRNEIQEVKLEEGNAGKFRRARFLRYSDESILSLIHLFIGYCTYLVNRRRLGSLRHDINIEAPQEEQYSSREQGTTENIKYGRRCLIGTASLYLLLFIGVAIYLGTTNAQIVWRLPPLVVPVEESEIIFWDCWAPEEPACQDFLGAMIHLKASTNISIQEGPTLGNWAREIWGTLFKKATRHCRRNKIWKRWNETITGPVGCANNTCYNISVIIPDYQCYLDRVDTWLQGKVNISLCLTGGKMLYNRDTKQLSYCTDPLQIPLINYTFGPNQTCMWNTSQIQDPEIPKCGWWNQIAYYNSCRWESTNVKFYCQRTQSQPGTWIRTISSWRQKNRWEWRPDFESEKVKISLQCNSTHNLTFAMRSSGDYGEVMGAWIEFGCHRNKSRFHTEARFRIRCRWNVGDNTSLIDTCGKNLNVSGANPVDCTMYANKMYNCSLQNGFTMKVDDLIMHFNMTKAVEMYNIAGNWSCKSDLPQNWGYMNCNCTNGTSNDNKMACPEDKGILRNWYNPVAGLRQALEKYQVVKQPEYIVVPTEVMTYKYKQKRAAIHIMLALATVLSIAGAGTGATAIGMVTQYQQVLATHQEALDKITEALKINNLRLVTLEHQMLVIGLKVEAIEKFLYTAFAMQELGCNQNQFFCEIPKELWLRYNMTLNQTIWNHGNITLGEWYNQTKYLQQKFYEIIMDIEQNNVQGKQGLQKLQNWQDWMGWIGKIPQYLKGLLGGILGIGLGILLLILCLPTLVDCIRNCISKVLGYTVIAMPEIDDEEETVQMELRKNGRQCGMSEKEEE.

The Extracellular segment spans residues 1-783 (MAEGFAANRQ…WIGKIPQYLK (783 aa)). Residues N220, N258, N269, N274, N298, N330, N336, N342, N418, N422, N448, N469, N481, N499, N518, N531, N548, and N551 are each glycosylated (N-linked (GlcNAc...) asparagine; by host). The interval 614 to 634 (IMLALATVLSIAGAGTGATAI) is fusion peptide. The stretch at 641-691 (QQVLATHQEALDKITEALKINNLRLVTLEHQMLVIGLKVEAIEKFLYTAFA) forms a coiled coil. The interval 660–678 (INNLRLVTLEHQMLVIGLK) is immunosuppression. 4 N-linked (GlcNAc...) asparagine; by host glycosylation sites follow: N715, N719, N727, and N735. Positions 734-770 (YNQTKYLQQKFYEIIMDIEQNNVQGKQGLQKLQNWQD) form a coiled coil. Residues 784–804 (GLLGGILGIGLGILLLILCLP) form a helical membrane-spanning segment. Residues 805 to 854 (TLVDCIRNCISKVLGYTVIAMPEIDDEEETVQMELRKNGRQCGMSEKEEE) lie on the Cytoplasmic side of the membrane.

In terms of assembly, the mature envelope protein (Env) consists of a trimer of SU-TM heterodimers attached by non-covalent interactions or by a labile interchain disulfide bond. Post-translationally, specific enzymatic cleavages in vivo yield mature proteins. Envelope glycoproteins are synthesized as an inactive precursor that is N-glycosylated and processed likely by host cell furin or by a furin-like protease in the Golgi to yield the mature SU and TM proteins. The cleavage site between SU and TM requires the minimal sequence [KR]-X-[KR]-R.

It is found in the virion membrane. The protein resides in the host cell membrane. The surface protein (SU) attaches the virus to the host cell by binding to its receptor. This interaction triggers the refolding of the transmembrane protein (TM) and is thought to activate its fusogenic potential by unmasking its fusion peptide. Fusion occurs at the host cell plasma membrane. Its function is as follows. The transmembrane protein (TM) acts as a class I viral fusion protein. Under the current model, the protein has at least 3 conformational states: pre-fusion native state, pre-hairpin intermediate state, and post-fusion hairpin state. During viral and target cell membrane fusion, the coiled coil regions (heptad repeats) assume a trimer-of-hairpins structure, positioning the fusion peptide in close proximity to the C-terminal region of the ectodomain. The formation of this structure appears to drive apposition and subsequent fusion of viral and target cell membranes. Membranes fusion leads to delivery of the nucleocapsid into the cytoplasm. The sequence is that of Envelope glycoprotein gp150 (env) from Feline immunodeficiency virus (strain San Diego) (FIV).